Consider the following 1167-residue polypeptide: DNA-directed RNA polymerase subunit beta (1167 aa).

Residues 1 to 27 (MAVSPANQATAATTSAESRSEATGIPG) form a disordered region. The segment covering 9-23 (ATAATTSAESRSEAT) has biased composition (low complexity).

It belongs to the RNA polymerase beta chain family. In terms of assembly, the RNAP catalytic core consists of 2 alpha, 1 beta, 1 beta' and 1 omega subunit. When a sigma factor is associated with the core the holoenzyme is formed, which can initiate transcription.

The enzyme catalyses RNA(n) + a ribonucleoside 5'-triphosphate = RNA(n+1) + diphosphate. Functionally, DNA-dependent RNA polymerase catalyzes the transcription of DNA into RNA using the four ribonucleoside triphosphates as substrates. In Amycolatopsis mediterranei (strain S699) (Nocardia mediterranei), this protein is DNA-directed RNA polymerase subunit beta.